The primary structure comprises 102 residues: Large ribosomal subunit protein uL24 (102 aa).

Belongs to the universal ribosomal protein uL24 family. Part of the 50S ribosomal subunit.

One of two assembly initiator proteins, it binds directly to the 5'-end of the 23S rRNA, where it nucleates assembly of the 50S subunit. In terms of biological role, one of the proteins that surrounds the polypeptide exit tunnel on the outside of the subunit. In Cupriavidus metallidurans (strain ATCC 43123 / DSM 2839 / NBRC 102507 / CH34) (Ralstonia metallidurans), this protein is Large ribosomal subunit protein uL24.